Consider the following 332-residue polypeptide: 5-dehydro-2-deoxygluconokinase 1 (332 aa).

Belongs to the carbohydrate kinase PfkB family.

It carries out the reaction 5-dehydro-2-deoxy-D-gluconate + ATP = 6-phospho-5-dehydro-2-deoxy-D-gluconate + ADP + H(+). It participates in polyol metabolism; myo-inositol degradation into acetyl-CoA; acetyl-CoA from myo-inositol: step 5/7. In terms of biological role, catalyzes the phosphorylation of 5-dehydro-2-deoxy-D-gluconate (2-deoxy-5-keto-D-gluconate or DKG) to 6-phospho-5-dehydro-2-deoxy-D-gluconate (DKGP). This is 5-dehydro-2-deoxygluconokinase 1 from Bacillus cereus (strain ZK / E33L).